A 449-amino-acid chain; its full sequence is Tubulin alpha-8 chain (449 aa).

The short motif at 1–4 (MREC) is the MREC motif element. GTP is bound by residues Gln-11, Glu-71, Ser-140, Gly-144, Thr-145, Thr-179, Asn-206, and Asn-228. Mg(2+) is bound at residue Glu-71. The active site involves Glu-254.

It belongs to the tubulin family. Dimer of alpha and beta chains. A typical microtubule is a hollow water-filled tube with an outer diameter of 25 nm and an inner diameter of 15 nM. Alpha-beta heterodimers associate head-to-tail to form protofilaments running lengthwise along the microtubule wall with the beta-tubulin subunit facing the microtubule plus end conferring a structural polarity. Microtubules usually have 13 protofilaments but different protofilament numbers can be found in some organisms and specialized cells. The cofactor is Mg(2+). Some glutamate residues at the C-terminus are polyglycylated, resulting in polyglycine chains on the gamma-carboxyl group. Glycylation is mainly limited to tubulin incorporated into axonemes (cilia and flagella) whereas glutamylation is prevalent in neuronal cells, centrioles, axonemes, and the mitotic spindle. Both modifications can coexist on the same protein on adjacent residues, and lowering polyglycylation levels increases polyglutamylation, and reciprocally. Cilia and flagella glycylation is required for their stability and maintenance. Flagella glycylation controls sperm motility. In terms of processing, some glutamate residues at the C-terminus are polyglutamylated, resulting in polyglutamate chains on the gamma-carboxyl group. Polyglutamylation plays a key role in microtubule severing by spastin (SPAST). SPAST preferentially recognizes and acts on microtubules decorated with short polyglutamate tails: severing activity by SPAST increases as the number of glutamates per tubulin rises from one to eight, but decreases beyond this glutamylation threshold. Glutamylation is also involved in cilia motility. Post-translationally, the C-terminal phenylalanine residue is cleaved by MATCAP1/KIAA0895L.

The protein localises to the cytoplasm. Its subcellular location is the cytoskeleton. It carries out the reaction GTP + H2O = GDP + phosphate + H(+). Tubulin is the major constituent of microtubules, a cylinder consisting of laterally associated linear protofilaments composed of alpha- and beta-tubulin heterodimers. Microtubules grow by the addition of GTP-tubulin dimers to the microtubule end, where a stabilizing cap forms. Below the cap, tubulin dimers are in GDP-bound state, owing to GTPase activity of alpha-tubulin. This chain is Tubulin alpha-8 chain (TUBA8), found in Bos taurus (Bovine).